The following is a 319-amino-acid chain: Ornithine carbamoyltransferase (319 aa).

Carbamoyl phosphate contacts are provided by residues 55 to 58, Q82, R106, and 133 to 136; these read STRT and HPCQ. L-ornithine-binding positions include N171, D234, and 238-239; that span reads SM. Carbamoyl phosphate is bound by residues 274-275 and R302; that span reads CL.

Belongs to the aspartate/ornithine carbamoyltransferase superfamily. OTCase family.

It localises to the cytoplasm. The enzyme catalyses carbamoyl phosphate + L-ornithine = L-citrulline + phosphate + H(+). The protein operates within amino-acid biosynthesis; L-arginine biosynthesis; L-arginine from L-ornithine and carbamoyl phosphate: step 1/3. Reversibly catalyzes the transfer of the carbamoyl group from carbamoyl phosphate (CP) to the N(epsilon) atom of ornithine (ORN) to produce L-citrulline. The protein is Ornithine carbamoyltransferase of Corynebacterium diphtheriae (strain ATCC 700971 / NCTC 13129 / Biotype gravis).